Consider the following 473-residue polypeptide: Photosystem II CP43 reaction center protein (473 aa).

The propeptide occupies 1 to 14 (MKTLYSPRRFYPVE). The residue at position 15 (T15) is an N-acetylthreonine. Phosphothreonine is present on T15. 5 helical membrane-spanning segments follow: residues 69–93 (LFEV…PHLA), 134–155 (LLGP…KDRN), 178–200 (KALY…RKIS), 255–275 (KPFA…LSYS), and 291–312 (WFNN…ASQA). E367 provides a ligand contact to [CaMn4O5] cluster. Residues 447 to 471 (RARAAAAGFEKGIDRDLEPVLFMTP) form a helical membrane-spanning segment.

This sequence belongs to the PsbB/PsbC family. PsbC subfamily. In terms of assembly, PSII is composed of 1 copy each of membrane proteins PsbA, PsbB, PsbC, PsbD, PsbE, PsbF, PsbH, PsbI, PsbJ, PsbK, PsbL, PsbM, PsbT, PsbX, PsbY, PsbZ, Psb30/Ycf12, at least 3 peripheral proteins of the oxygen-evolving complex and a large number of cofactors. It forms dimeric complexes. Requires Binds multiple chlorophylls and provides some of the ligands for the Ca-4Mn-5O cluster of the oxygen-evolving complex. It may also provide a ligand for a Cl- that is required for oxygen evolution. PSII binds additional chlorophylls, carotenoids and specific lipids. as cofactor.

The protein localises to the plastid. It localises to the chloroplast thylakoid membrane. Its function is as follows. One of the components of the core complex of photosystem II (PSII). It binds chlorophyll and helps catalyze the primary light-induced photochemical processes of PSII. PSII is a light-driven water:plastoquinone oxidoreductase, using light energy to abstract electrons from H(2)O, generating O(2) and a proton gradient subsequently used for ATP formation. The chain is Photosystem II CP43 reaction center protein from Ranunculus macranthus (Large buttercup).